The primary structure comprises 369 residues: Anhydro-N-acetylmuramic acid kinase (369 aa).

12-19 is a binding site for ATP; that stretch reads GTSMDGVD.

This sequence belongs to the anhydro-N-acetylmuramic acid kinase family.

It catalyses the reaction 1,6-anhydro-N-acetyl-beta-muramate + ATP + H2O = N-acetyl-D-muramate 6-phosphate + ADP + H(+). It participates in amino-sugar metabolism; 1,6-anhydro-N-acetylmuramate degradation. The protein operates within cell wall biogenesis; peptidoglycan recycling. Catalyzes the specific phosphorylation of 1,6-anhydro-N-acetylmuramic acid (anhMurNAc) with the simultaneous cleavage of the 1,6-anhydro ring, generating MurNAc-6-P. Is required for the utilization of anhMurNAc either imported from the medium or derived from its own cell wall murein, and thus plays a role in cell wall recycling. This is Anhydro-N-acetylmuramic acid kinase from Shewanella oneidensis (strain ATCC 700550 / JCM 31522 / CIP 106686 / LMG 19005 / NCIMB 14063 / MR-1).